A 146-amino-acid chain; its full sequence is Flagellar assembly factor FliW 1 (146 aa).

This sequence belongs to the FliW family. As to quaternary structure, interacts with translational regulator CsrA and flagellin(s).

Its subcellular location is the cytoplasm. Functionally, acts as an anti-CsrA protein, binds CsrA and prevents it from repressing translation of its target genes, one of which is flagellin. Binds to flagellin and participates in the assembly of the flagellum. The chain is Flagellar assembly factor FliW 1 from Helicobacter hepaticus (strain ATCC 51449 / 3B1).